We begin with the raw amino-acid sequence, 315 residues long: NAD-dependent protein lipoamidase sirtuin-4, mitochondrial (315 aa).

The transit peptide at 1 to 29 directs the protein to the mitochondrion; the sequence is MRMSFGLTFKRTAKVHWRANFSQQCSLRS. The region spanning 38 to 315 is the Deacetylase sirtuin-type domain; it reads PPLDPEKVKE…GELLPLIDPR (278 aa). Residues 63-83 and 144-147 contribute to the NAD(+) site; these read GAGI…VGLY and QNVD. Catalysis depends on H162, which acts as the Proton acceptor. Zn(2+) contacts are provided by C170, C173, C221, and C224. Residues 261 to 263, 287 to 289, and C305 each bind NAD(+); these read GSS and NIG.

It belongs to the sirtuin family. Class II subfamily. In terms of assembly, interacts with GLUD1, IDE and SLC25A5. Interacts with DLAT and PDHX. Interacts with MCCC1 (via the biotin carboxylation domain). Interacts with PCCA and PC. It depends on Zn(2+) as a cofactor.

It localises to the mitochondrion matrix. The catalysed reaction is N(6)-[(R)-lipoyl]-L-lysyl-[protein] + NAD(+) + H2O = 2''-O-lipoyl-ADP-D-ribose + nicotinamide + L-lysyl-[protein]. It carries out the reaction N(6)-biotinyl-L-lysyl-[protein] + NAD(+) + H2O = 2''-O-biotinyl-ADP-D-ribose + nicotinamide + L-lysyl-[protein]. It catalyses the reaction N(6)-acetyl-L-lysyl-[protein] + NAD(+) + H2O = 2''-O-acetyl-ADP-D-ribose + nicotinamide + L-lysyl-[protein]. The enzyme catalyses L-cysteinyl-[protein] + NAD(+) = S-(ADP-D-ribosyl)-L-cysteinyl-[protein] + nicotinamide + H(+). Acts as a NAD-dependent protein lipoamidase, biotinylase, deacetylase and ADP-ribosyl transferase. Catalyzes more efficiently removal of lipoyl- and biotinyl- than acetyl-lysine modifications. Inhibits the pyruvate dehydrogenase complex (PDH) activity via the enzymatic hydrolysis of the lipoamide cofactor from the E2 component, DLAT, in a phosphorylation-independent manner. Catalyzes the transfer of ADP-ribosyl groups onto target proteins, including mitochondrial GLUD1, inhibiting GLUD1 enzyme activity. Acts as a negative regulator of mitochondrial glutamine metabolism by mediating mono ADP-ribosylation of GLUD1: expressed in response to DNA damage and negatively regulates anaplerosis by inhibiting GLUD1, leading to block metabolism of glutamine into tricarboxylic acid cycle and promoting cell cycle arrest. In response to mTORC1 signal, SIRT4 expression is repressed, promoting anaplerosis and cell proliferation. Acts as a tumor suppressor. Also acts as a NAD-dependent protein deacetylase: mediates deacetylation of 'Lys-471' of MLYCD, inhibiting its activity, thereby acting as a regulator of lipid homeostasis. Does not seem to deacetylate PC. Controls fatty acid oxidation by inhibiting PPARA transcriptional activation. Impairs SIRT1-PPARA interaction probably through the regulation of NAD(+) levels. Down-regulates insulin secretion. This chain is NAD-dependent protein lipoamidase sirtuin-4, mitochondrial, found in Bos taurus (Bovine).